The following is a 240-amino-acid chain: Phosphatidylserine decarboxylase proenzyme (240 aa).

The active-site Schiff-base intermediate with substrate; via pyruvic acid is Ser-209. Pyruvic acid (Ser); by autocatalysis is present on Ser-209.

This sequence belongs to the phosphatidylserine decarboxylase family. PSD-A subfamily. Heterodimer of a large membrane-associated beta subunit and a small pyruvoyl-containing alpha subunit. Pyruvate is required as a cofactor. Is synthesized initially as an inactive proenzyme. Formation of the active enzyme involves a self-maturation process in which the active site pyruvoyl group is generated from an internal serine residue via an autocatalytic post-translational modification. Two non-identical subunits are generated from the proenzyme in this reaction, and the pyruvate is formed at the N-terminus of the alpha chain, which is derived from the carboxyl end of the proenzyme. The post-translation cleavage follows an unusual pathway, termed non-hydrolytic serinolysis, in which the side chain hydroxyl group of the serine supplies its oxygen atom to form the C-terminus of the beta chain, while the remainder of the serine residue undergoes an oxidative deamination to produce ammonia and the pyruvoyl prosthetic group on the alpha chain.

It is found in the cell membrane. It catalyses the reaction a 1,2-diacyl-sn-glycero-3-phospho-L-serine + H(+) = a 1,2-diacyl-sn-glycero-3-phosphoethanolamine + CO2. The protein operates within phospholipid metabolism; phosphatidylethanolamine biosynthesis; phosphatidylethanolamine from CDP-diacylglycerol: step 2/2. In terms of biological role, catalyzes the formation of phosphatidylethanolamine (PtdEtn) from phosphatidylserine (PtdSer). This Mycobacterium marinum (strain ATCC BAA-535 / M) protein is Phosphatidylserine decarboxylase proenzyme.